Reading from the N-terminus, the 239-residue chain is Ditrans,polycis-undecaprenyl-diphosphate synthase ((2E,6E)-farnesyl-diphosphate specific) (239 aa).

Residue aspartate 18 is part of the active site. Aspartate 18 lines the Mg(2+) pocket. Residues 19-22 (GNGR), tryptophan 23, arginine 31, histidine 35, and 63-65 (SSE) contribute to the substrate site. The Proton acceptor role is filled by asparagine 66. Substrate contacts are provided by residues tryptophan 67, arginine 69, arginine 186, and 192-194 (RIS). Glutamate 205 contacts Mg(2+).

This sequence belongs to the UPP synthase family. As to quaternary structure, homodimer. It depends on Mg(2+) as a cofactor.

It catalyses the reaction 8 isopentenyl diphosphate + (2E,6E)-farnesyl diphosphate = di-trans,octa-cis-undecaprenyl diphosphate + 8 diphosphate. In terms of biological role, catalyzes the sequential condensation of isopentenyl diphosphate (IPP) with (2E,6E)-farnesyl diphosphate (E,E-FPP) to yield (2Z,6Z,10Z,14Z,18Z,22Z,26Z,30Z,34E,38E)-undecaprenyl diphosphate (di-trans,octa-cis-UPP). UPP is the precursor of glycosyl carrier lipid in the biosynthesis of bacterial cell wall polysaccharide components such as peptidoglycan and lipopolysaccharide. This Haemophilus influenzae (strain ATCC 51907 / DSM 11121 / KW20 / Rd) protein is Ditrans,polycis-undecaprenyl-diphosphate synthase ((2E,6E)-farnesyl-diphosphate specific).